Reading from the N-terminus, the 209-residue chain is Glutathione S-transferase 1-1 (209 aa).

A GST N-terminal domain is found at 1 to 81 (MADFYYLPGS…YLVEKYGKTD (81 aa)). Residues 51–53 (HTI) and 65–67 (ESR) each bind glutathione. A GST C-terminal domain is found at 87–209 (CPKKRAVINQ…GCLEFKKYFE (123 aa)).

The protein belongs to the GST superfamily. Theta family. Homodimer.

The enzyme catalyses RX + glutathione = an S-substituted glutathione + a halide anion + H(+). Conjugation of reduced glutathione to a wide number of exogenous and endogenous hydrophobic electrophiles. The sequence is that of Glutathione S-transferase 1-1 (GstD1) from Drosophila yakuba (Fruit fly).